Reading from the N-terminus, the 77-residue chain is DNA-directed RNA polymerase subunit omega (77 aa).

It belongs to the RNA polymerase subunit omega family. As to quaternary structure, the RNAP catalytic core consists of 2 alpha, 1 beta, 1 beta' and 1 omega subunit. When a sigma factor is associated with the core the holoenzyme is formed, which can initiate transcription.

It carries out the reaction RNA(n) + a ribonucleoside 5'-triphosphate = RNA(n+1) + diphosphate. Promotes RNA polymerase assembly. Latches the N- and C-terminal regions of the beta' subunit thereby facilitating its interaction with the beta and alpha subunits. The protein is DNA-directed RNA polymerase subunit omega of Dichelobacter nodosus (strain VCS1703A).